The chain runs to 253 residues: MAMMMRKAAAVPASSRRSVAVNSVSGKRTVSGKAGAPVPEDVLAYAKTLPGVTAPFDNVFDPAGFLATASVKDVRRWRESEITHGRVAMLAALGFIVGEQLQDFPLFFNFDGRVSGPAIYHFQQIGQGFWEPLLIAIGVAESYRVAVGWATPTGTGFNSLKDDYEPGDLGFDPLGLKPTDPEELKTLQTKELNNGRLAMIAIAAFVAQELVEQTEIFEHLVLRFEKEVILELEDVERDLGLPLTPLPDNLKAI.

The transit peptide at 1–39 (MAMMMRKAAAVPASSRRSVAVNSVSGKRTVSGKAGAPVP) directs the protein to the chloroplast. Residue tyrosine 45 participates in chlorophyll b binding. Residues phenylalanine 60, glutamate 81, and histidine 84 each contribute to the chlorophyll a site. Arginine 86 contacts chlorophyll b. A helical transmembrane segment spans residues 87–107 (VAMLAALGFIVGEQLQDFPLF). Glutamine 124 contacts chlorophyll a. The chain crosses the membrane as a helical span at residues 131–151 (EPLLIAIGVAESYRVAVGWAT). Chlorophyll b is bound by residues glutamate 141 and arginine 144. Chlorophyll a contacts are provided by lysine 190, glutamate 191, asparagine 194, arginine 196, and glutamine 208. The helical transmembrane segment at 197-217 (LAMIAIAAFVAQELVEQTEIF) threads the bilayer.

It belongs to the light-harvesting chlorophyll a/b-binding (LHC) protein family.

Its subcellular location is the plastid. The protein resides in the chloroplast thylakoid membrane. In terms of biological role, required for non-photochemical quenching (NPQ), a mechanism that converts and dissipates the harmful excess absorbed light energy into heat and protect the photosynthetic apparatus from photo-oxidative damage. Is able to sense luminal acidification of the thylakoid membranes, which occurs along with elevated electron flow caused by excess light, and to induce a large, fast, and reversible pH-dependent quenching in LHCII-containing membranes. Mediates excitation energy transfer from light-harvesting complex II (LHCII) to photosystem I (PSI), rather than photosystem II (PSII), at low pH, which mimics the acidified lumen of the thylakoid membranes in high light-exposed chloroplasts. Activates PSI-dependent fluorescence quenching in addition to dissipating excitation energy in LHCII to avoid photooxidative stress under excess light. The chain is Light-harvesting complex stress-related protein 1, chloroplastic from Chlamydomonas reinhardtii (Chlamydomonas smithii).